Consider the following 369-residue polypeptide: Naringenin,2-oxoglutarate 3-dioxygenase (369 aa).

The Fe2OG dioxygenase domain maps to 193–297 (CVDMDQKVVV…RLSIATFQNP (105 aa)). Fe cation contacts are provided by histidine 220, aspartate 222, and histidine 278. Arginine 288 contacts 2-oxoglutarate.

It belongs to the iron/ascorbate-dependent oxidoreductase family. Fe(2+) is required as a cofactor. The cofactor is L-ascorbate.

It catalyses the reaction a (2S)-flavan-4-one + 2-oxoglutarate + O2 = a (2R,3R)-dihydroflavonol + succinate + CO2. The protein operates within secondary metabolite biosynthesis; flavonoid biosynthesis. In terms of biological role, catalyzes the 3-beta-hydroxylation of 2S-flavanones to 2R,3R-dihydroflavonols which are intermediates in the biosynthesis of flavonols, anthocyanidins, catechins and proanthocyanidins in plants. The sequence is that of Naringenin,2-oxoglutarate 3-dioxygenase (AN3) from Petunia hybrida (Petunia).